A 217-amino-acid polypeptide reads, in one-letter code: Growth hormone variant (217 aa).

An N-terminal signal peptide occupies residues 1-26 (MAAGSRTSLLLAFGLLCLSWLQEGSA). 2 disulfides stabilise this stretch: C79-C191 and C208-C215. Position 132 is a phosphoserine (S132). An N-linked (GlcNAc...) asparagine glycan is attached at N166. Residue S176 is modified to Phosphoserine.

It belongs to the somatotropin/prolactin family. As to quaternary structure, monomer, dimer, trimer, tetramer and pentamer, disulfide-linked or non-covalently associated, in homomeric and heteromeric combinations. Can also form a complex either with GHBP or with the alpha2-macroglobulin complex. In terms of tissue distribution, expressed in the placenta.

The protein localises to the secreted. Plays an important role in growth control. Its major role in stimulating body growth is to stimulate the liver and other tissues to secrete IGF1. It stimulates both the differentiation and proliferation of myoblasts. It also stimulates amino acid uptake and protein synthesis in muscle and other tissues. In Homo sapiens (Human), this protein is Growth hormone variant (GH2).